A 203-amino-acid polypeptide reads, in one-letter code: MGADKITSKILDDANNTASKIKSEAQKEADLILEKAKIEAEEQTQDILKRGDKEAETTYNRILAEARLNSKKKMLKERENLINMAIEKLKEDLKELPKKDSYKDILLKLIIEGVMSLDGNELVVVLNEQDMELIEDSALWAIEKELESKVKKVIILKKGAPANIIGGCIIKTADGTKFCDNSLESVFERNMESIRANVASLLF.

This sequence belongs to the V-ATPase E subunit family. In terms of assembly, has multiple subunits with at least A(3), B(3), C, D, E, F, H, I and proteolipid K(x).

Its subcellular location is the cell membrane. Component of the A-type ATP synthase that produces ATP from ADP in the presence of a proton gradient across the membrane. The polypeptide is A-type ATP synthase subunit E (Methanococcus aeolicus (strain ATCC BAA-1280 / DSM 17508 / OCM 812 / Nankai-3)).